The following is a 706-amino-acid chain: Fatty acid oxidation complex subunit alpha (706 aa).

Positions 1–188 (MEKTFSLSRR…KMGLVDDVVP (188 aa)) are enoyl-CoA hydratase. Residues 308 to 706 (RKVAKAVVLG…AMAAEGKTFY (399 aa)) are 3-hydroxyacyl-CoA dehydrogenase.

In the N-terminal section; belongs to the enoyl-CoA hydratase/isomerase family. It in the central section; belongs to the 3-hydroxyacyl-CoA dehydrogenase family. As to quaternary structure, heterotetramer of two alpha chains (FadJ) and two beta chains (FadI).

It localises to the cytoplasm. The enzyme catalyses a (3S)-3-hydroxyacyl-CoA = a (2E)-enoyl-CoA + H2O. The catalysed reaction is a 4-saturated-(3S)-3-hydroxyacyl-CoA = a (3E)-enoyl-CoA + H2O. It carries out the reaction a (3S)-3-hydroxyacyl-CoA + NAD(+) = a 3-oxoacyl-CoA + NADH + H(+). It catalyses the reaction (3S)-3-hydroxybutanoyl-CoA = (3R)-3-hydroxybutanoyl-CoA. It functions in the pathway lipid metabolism; fatty acid beta-oxidation. Functionally, catalyzes the formation of a hydroxyacyl-CoA by addition of water on enoyl-CoA. Also exhibits 3-hydroxyacyl-CoA epimerase and 3-hydroxyacyl-CoA dehydrogenase activities. The sequence is that of Fatty acid oxidation complex subunit alpha from Shewanella amazonensis (strain ATCC BAA-1098 / SB2B).